We begin with the raw amino-acid sequence, 325 residues long: Glycerol-3-phosphate dehydrogenase [NAD(P)+] (325 aa).

Residues serine 14, phenylalanine 15, arginine 35, and lysine 109 each contribute to the NADPH site. Sn-glycerol 3-phosphate is bound by residues lysine 109 and glycine 137. Alanine 141 provides a ligand contact to NADPH. Sn-glycerol 3-phosphate-binding residues include lysine 192, aspartate 247, serine 257, arginine 258, and asparagine 259. Lysine 192 functions as the Proton acceptor in the catalytic mechanism. Position 258 (arginine 258) interacts with NADPH. Residues leucine 282 and glutamate 284 each coordinate NADPH.

The protein belongs to the NAD-dependent glycerol-3-phosphate dehydrogenase family.

The protein resides in the cytoplasm. It catalyses the reaction sn-glycerol 3-phosphate + NAD(+) = dihydroxyacetone phosphate + NADH + H(+). The enzyme catalyses sn-glycerol 3-phosphate + NADP(+) = dihydroxyacetone phosphate + NADPH + H(+). Its pathway is membrane lipid metabolism; glycerophospholipid metabolism. Functionally, catalyzes the reduction of the glycolytic intermediate dihydroxyacetone phosphate (DHAP) to sn-glycerol 3-phosphate (G3P), the key precursor for phospholipid synthesis. This chain is Glycerol-3-phosphate dehydrogenase [NAD(P)+], found in Rickettsia africae (strain ESF-5).